The sequence spans 435 residues: Arginine biosynthesis bifunctional protein ArgJ, mitochondrial (435 aa).

Substrate is bound by residues Thr-167, Lys-193, Thr-204, Glu-291, Asn-430, and Thr-435. The active-site Nucleophile is the Thr-204.

The protein belongs to the ArgJ family. In terms of assembly, heterodimer of an alpha and a beta chain. The alpha and beta chains are autoproteolytically processed from a single precursor protein within the mitochondrion.

It is found in the mitochondrion matrix. The enzyme catalyses N(2)-acetyl-L-ornithine + L-glutamate = N-acetyl-L-glutamate + L-ornithine. It catalyses the reaction L-glutamate + acetyl-CoA = N-acetyl-L-glutamate + CoA + H(+). It participates in amino-acid biosynthesis; L-arginine biosynthesis; L-ornithine and N-acetyl-L-glutamate from L-glutamate and N(2)-acetyl-L-ornithine (cyclic): step 1/1. Its pathway is amino-acid biosynthesis; L-arginine biosynthesis; N(2)-acetyl-L-ornithine from L-glutamate: step 1/4. Functionally, catalyzes two activities which are involved in the cyclic version of arginine biosynthesis: the synthesis of acetylglutamate from glutamate and acetyl-CoA, and of ornithine by transacetylation between acetylornithine and glutamate. The protein is Arginine biosynthesis bifunctional protein ArgJ, mitochondrial of Heterostelium pallidum (strain ATCC 26659 / Pp 5 / PN500) (Cellular slime mold).